Reading from the N-terminus, the 382-residue chain is Glutamine synthetase cytosolic isozyme (382 aa).

The region spanning 36–118 (GKICAEYVWI…VMCDCYEPPK (83 aa)) is the GS beta-grasp domain. In terms of domain architecture, GS catalytic spans 135 to 382 (TRFACAEVME…RLIVETTILL (248 aa)).

The protein belongs to the glutamine synthetase family. As to quaternary structure, homooctamer.

It localises to the cytoplasm. The enzyme catalyses L-glutamate + NH4(+) + ATP = L-glutamine + ADP + phosphate + H(+). This chain is Glutamine synthetase cytosolic isozyme (GLN1), found in Chlamydomonas reinhardtii (Chlamydomonas smithii).